The sequence spans 450 residues: Phosphoglucosamine mutase (450 aa).

Residue serine 101 is the Phosphoserine intermediate of the active site. Positions 101, 240, 242, and 244 each coordinate Mg(2+). Serine 101 bears the Phosphoserine mark.

Belongs to the phosphohexose mutase family. It depends on Mg(2+) as a cofactor. In terms of processing, activated by phosphorylation.

It catalyses the reaction alpha-D-glucosamine 1-phosphate = D-glucosamine 6-phosphate. In terms of biological role, catalyzes the conversion of glucosamine-6-phosphate to glucosamine-1-phosphate. In Streptococcus equi subsp. equi (strain 4047), this protein is Phosphoglucosamine mutase.